A 220-amino-acid chain; its full sequence is Ribosomal RNA small subunit methyltransferase G (220 aa).

Residues G82, L87, V137–E138, and R152 each bind S-adenosyl-L-methionine.

This sequence belongs to the methyltransferase superfamily. RNA methyltransferase RsmG family.

Its subcellular location is the cytoplasm. The enzyme catalyses guanosine(527) in 16S rRNA + S-adenosyl-L-methionine = N(7)-methylguanosine(527) in 16S rRNA + S-adenosyl-L-homocysteine. Functionally, specifically methylates the N7 position of guanine in position 527 of 16S rRNA. This is Ribosomal RNA small subunit methyltransferase G from Janthinobacterium sp. (strain Marseille) (Minibacterium massiliensis).